An 813-amino-acid chain; its full sequence is Homeobox-leucine zipper protein ROC4 (813 aa).

The tract at residues 62–112 is disordered; the sequence is EVENEMSRSGSDHLDVVSCGDAGGGGGDDDDDEDAEHGNPPKRKKRYHRHT. The segment covering 101–112 has biased composition (basic residues); sequence PPKRKKRYHRHT. A DNA-binding region (homeobox) is located at residues 104-163; the sequence is RKKRYHRHTPQQIQELEAMFKECPHPDEKQRAELSKRLGLEPRQVKFWFQNRRTQMKMQL. Positions 152-191 form a coiled coil; sequence FQNRRTQMKMQLERHENSLLKQENDKLRSENLSIREATSN. An START domain is found at 306–559; it reads AGIDKSLFLE…LQRQCECLAL (254 aa).

The protein belongs to the HD-ZIP homeobox family. Class IV subfamily.

The protein localises to the nucleus. Functionally, probable transcription factor. This is Homeobox-leucine zipper protein ROC4 (ROC4) from Oryza sativa subsp. japonica (Rice).